The sequence spans 209 residues: Uracil phosphoribosyltransferase (209 aa).

Residues arginine 77, arginine 102, and aspartate 129–serine 137 contribute to the 5-phospho-alpha-D-ribose 1-diphosphate site. Uracil contacts are provided by residues isoleucine 192 and glycine 197–alanine 199. Aspartate 198 is a binding site for 5-phospho-alpha-D-ribose 1-diphosphate.

It belongs to the UPRTase family. It depends on Mg(2+) as a cofactor.

It catalyses the reaction UMP + diphosphate = 5-phospho-alpha-D-ribose 1-diphosphate + uracil. It functions in the pathway pyrimidine metabolism; UMP biosynthesis via salvage pathway; UMP from uracil: step 1/1. With respect to regulation, allosterically activated by GTP. Its function is as follows. Catalyzes the conversion of uracil and 5-phospho-alpha-D-ribose 1-diphosphate (PRPP) to UMP and diphosphate. This Metamycoplasma arthritidis (strain 158L3-1) (Mycoplasma arthritidis) protein is Uracil phosphoribosyltransferase.